We begin with the raw amino-acid sequence, 580 residues long: Frizzled and smoothened-like protein K (580 aa).

Positions 1-18 (MRVLFILFLFYFYTYTEA) are cleaved as a signal peptide. Residues 19–236 (QQYYPIDPTG…QWDNIFDTSD (218 aa)) are Extracellular-facing. Residues 25–154 (DPTGKCEQYI…SSDYNLTTYG (130 aa)) form the FZ domain. Residues Asn52, Asn97, Asn149, Asn170, and Asn186 are each glycosylated (N-linked (GlcNAc...) asparagine). A helical transmembrane segment spans residues 237-257 (AISLVSLLCSVYLFITYMVIN). Topologically, residues 258–264 (PKRNKYD) are cytoplasmic. The helical transmembrane segment at 265–285 (YFFSFFVLSIILMSIAGTIGF) threads the bilayer. Over 286–308 (SVGGTRKLLCPEINRRGVYTDPA) the chain is Extracellular. Residues 309–329 (VAAAGWIFQFAIINAILWFSI) traverse the membrane as a helical segment. At 330–349 (NSFELWFQIKFIKRKLHLIK) the chain is on the cytoplasmic side. A helical transmembrane segment spans residues 350-370 (FYILAVLVISIALSVPLSAIG). The Extracellular segment spans residues 371-391 (EFNAGLGNFVVWIESGKYQNW). Residues 392–412 (FFWGPLGIVLTVGTTFIGLVI) traverse the membrane as a helical segment. The Cytoplasmic segment spans residues 413-434 (WEIYKIVSSTNKSDFFKLQLKP). The chain crosses the membrane as a helical span at residues 435-455 (LMNMLLIYLTFVYLFGYNFYI). The Extracellular segment spans residues 456 to 490 (HNSLNGFYGSSEEFKNCIISTDGKDCRIQGPPYSS). Residues 491–511 (ILMFVFCLRIYGVYCIALYGF) form a helical membrane-spanning segment. At 512–580 (SPKTRSIWSN…SMEPDEIILR (69 aa)) the chain is on the cytoplasmic side. Residues 514–519 (KTRSIW) carry the Lys-Thr-X-X-X-Trp motif, mediates interaction with the PDZ domain of Dvl family members motif. The interval 542 to 580 (TTKGGTSSTDIKMSTNNNSNMDSGGGKSSSMEPDEIILR) is disordered. The span at 551 to 563 (DIKMSTNNNSNMD) shows a compositional bias: polar residues.

The protein belongs to the G-protein coupled receptor Fz/Smo family.

It localises to the membrane. In Dictyostelium discoideum (Social amoeba), this protein is Frizzled and smoothened-like protein K (fslK).